Reading from the N-terminus, the 470-residue chain is Putative bifunctional phosphatase/peptidyl-prolyl cis-trans isomerase (470 aa).

Residue Asp22 is the Nucleophile of the active site. Residues Asp22, Asp24, and Asp221 each contribute to the Mg(2+) site. The PPIase cyclophilin-type domain maps to 286-468; the sequence is TGPKVTIKTN…EDVIIETIEV (183 aa).

It in the C-terminal section; belongs to the cyclophilin-type PPIase family. PPIL1 subfamily. The cofactor is Mg(2+).

It carries out the reaction [protein]-peptidylproline (omega=180) = [protein]-peptidylproline (omega=0). Its function is as follows. PPIases accelerate the folding of proteins. It catalyzes the cis-trans isomerization of proline imidic peptide bonds in oligopeptides. This Streptococcus pyogenes serotype M6 (strain ATCC BAA-946 / MGAS10394) protein is Putative bifunctional phosphatase/peptidyl-prolyl cis-trans isomerase.